We begin with the raw amino-acid sequence, 280 residues long: MPELPEVETTRKGIQPKVEGQAIQKIIIRNGKLRWPVDPSLVEKLPGLVVLSIKRRAKYLLLETDQGHLIIHLGMSGNLRVLPQHEPAVKHDHIDLLLENGFLLRYHDPRRFGSWLWTEAPIQEHSLLKSLGPEPLTDAFNAEYLFQKLQGRKTAIKTFIMNNQIVVGVGNIYANESLFLSGIHPTRPAQSLTLTEATKLTAHIKTVLSAAIEQGGTTLKDFLTPDGKPGYFEQKLNVYGRENLPCPQCDSAIEKVVLNQRAAYFCSNCQKQLDSTVKIK.

Pro2 acts as the Schiff-base intermediate with DNA in catalysis. Glu3 acts as the Proton donor in catalysis. Catalysis depends on Lys58, which acts as the Proton donor; for beta-elimination activity. 3 residues coordinate DNA: His91, Arg110, and Arg152. The FPG-type zinc finger occupies 237 to 271; the sequence is NVYGRENLPCPQCDSAIEKVVLNQRAAYFCSNCQK. The active-site Proton donor; for delta-elimination activity is Arg261.

The protein belongs to the FPG family. Monomer. The cofactor is Zn(2+).

The enzyme catalyses Hydrolysis of DNA containing ring-opened 7-methylguanine residues, releasing 2,6-diamino-4-hydroxy-5-(N-methyl)formamidopyrimidine.. It catalyses the reaction 2'-deoxyribonucleotide-(2'-deoxyribose 5'-phosphate)-2'-deoxyribonucleotide-DNA = a 3'-end 2'-deoxyribonucleotide-(2,3-dehydro-2,3-deoxyribose 5'-phosphate)-DNA + a 5'-end 5'-phospho-2'-deoxyribonucleoside-DNA + H(+). Functionally, involved in base excision repair of DNA damaged by oxidation or by mutagenic agents. Acts as a DNA glycosylase that recognizes and removes damaged bases. Has a preference for oxidized purines, such as 7,8-dihydro-8-oxoguanine (8-oxoG). Has AP (apurinic/apyrimidinic) lyase activity and introduces nicks in the DNA strand. Cleaves the DNA backbone by beta-delta elimination to generate a single-strand break at the site of the removed base with both 3'- and 5'-phosphates. The chain is Formamidopyrimidine-DNA glycosylase from Hydrogenovibrio crunogenus (strain DSM 25203 / XCL-2) (Thiomicrospira crunogena).